The primary structure comprises 592 residues: MSLGITGKIYRVSGPLVIAENMRGSKVYEVVEVGSDRLIGEIIGVEGDKAIIQVYEDTSGLRVGDPVYGTGYPLAAELGPGLVGSIYDGIQRPLPLLQELVGFFVKRGVKAKPLPRNKKWHFKPLVKQGEKVGPDDVIGYVEETPVIKHYIMIPPDTHGVVEEIVGEGEYTIVDPIARINGKEIVMLQKWPVRKPRPYREKLEHREPVLTGQRVIDFFFPLAKGGKAAIPGGFGTGKTVTLQQLTKWSAVDIAIYVGCGERGNEMADALHSFRRLVDPRTGKALVERSVFIANTSNMPVAARETSIFLGATIGEYFRDMGYHVLMVADSTSRWAEAMREISGRLEELPGEEGYPAYLGSRLASFYERSGYVKTLGRPDRTGSLTIMGAVSPPGADFSEPVTQATLRIVRALYALDVNLAYRRHYPAINWLISYSLYVDNVTDWWHKNIDPSWRELREKALAILQKEAELEELVRLVGAEALPEEDKLLLEVARMIREDFLQQNAFHEIDTYCPPRKAVLMMKAIMLFYELGLEAIKRGISMEKIRELKSRVKIARMKEIPNIDFEDAFKSLFEDIRRDFESLMKEAETIAEL.

ATP is bound at residue Gly-231–Thr-238.

This sequence belongs to the ATPase alpha/beta chains family. In terms of assembly, has multiple subunits with at least A(3), B(3), C, D, E, F, H, I and proteolipid K(x).

The protein localises to the cell membrane. It carries out the reaction ATP + H2O + 4 H(+)(in) = ADP + phosphate + 5 H(+)(out). Its function is as follows. Component of the A-type ATP synthase that produces ATP from ADP in the presence of a proton gradient across the membrane. The A chain is the catalytic subunit. This Staphylothermus marinus (strain ATCC 43588 / DSM 3639 / JCM 9404 / F1) protein is A-type ATP synthase subunit A.